A 143-amino-acid chain; its full sequence is D-aminoacyl-tRNA deacylase (143 aa).

The Gly-cisPro motif, important for rejection of L-amino acids motif lies at 135 to 136; it reads GP.

The protein belongs to the DTD family. In terms of assembly, homodimer.

It localises to the cytoplasm. It carries out the reaction glycyl-tRNA(Ala) + H2O = tRNA(Ala) + glycine + H(+). The catalysed reaction is a D-aminoacyl-tRNA + H2O = a tRNA + a D-alpha-amino acid + H(+). In terms of biological role, an aminoacyl-tRNA editing enzyme that deacylates mischarged D-aminoacyl-tRNAs. Also deacylates mischarged glycyl-tRNA(Ala), protecting cells against glycine mischarging by AlaRS. Acts via tRNA-based rather than protein-based catalysis; rejects L-amino acids rather than detecting D-amino acids in the active site. By recycling D-aminoacyl-tRNA to D-amino acids and free tRNA molecules, this enzyme counteracts the toxicity associated with the formation of D-aminoacyl-tRNA entities in vivo and helps enforce protein L-homochirality. The protein is D-aminoacyl-tRNA deacylase of Nocardia farcinica (strain IFM 10152).